A 139-amino-acid polypeptide reads, in one-letter code: Small ribosomal subunit protein bS6 (139 aa).

The disordered stretch occupies residues 97-139; that stretch reads TEASPMAKAKDERDSRRSSEGERRSAPAEATEEVKETAEKAAE. Over residues 104–139 the composition is skewed to basic and acidic residues; the sequence is KAKDERDSRRSSEGERRSAPAEATEEVKETAEKAAE.

Belongs to the bacterial ribosomal protein bS6 family.

Functionally, binds together with bS18 to 16S ribosomal RNA. This Shewanella sediminis (strain HAW-EB3) protein is Small ribosomal subunit protein bS6.